Here is a 250-residue protein sequence, read N- to C-terminus: Triosephosphate isomerase (250 aa).

Asn9–Lys11 serves as a coordination point for substrate. His95 (electrophile) is an active-site residue. Catalysis depends on Glu167, which acts as the Proton acceptor. Residues Gly173, Ser213, and Gly234–Gly235 each bind substrate.

Belongs to the triosephosphate isomerase family. Homodimer.

It is found in the cytoplasm. It catalyses the reaction D-glyceraldehyde 3-phosphate = dihydroxyacetone phosphate. Its pathway is carbohydrate biosynthesis; gluconeogenesis. It functions in the pathway carbohydrate degradation; glycolysis; D-glyceraldehyde 3-phosphate from glycerone phosphate: step 1/1. Its function is as follows. Involved in the gluconeogenesis. Catalyzes stereospecifically the conversion of dihydroxyacetone phosphate (DHAP) to D-glyceraldehyde-3-phosphate (G3P). The sequence is that of Triosephosphate isomerase from Flavobacterium psychrophilum (strain ATCC 49511 / DSM 21280 / CIP 103535 / JIP02/86).